The primary structure comprises 61 residues: uncharacterized protein (61 aa).

The N-terminal stretch at 1 to 28 (MHRRARRMPMRPRRSKRVRNRYTMGTFA) is a signal peptide.

This is an uncharacterized protein from Mycobacterium tuberculosis (strain ATCC 25618 / H37Rv).